The following is a 210-amino-acid chain: Probable GTP-binding protein EngB (210 aa).

The EngB-type G domain occupies 25-199 (RGIEVAFAGR…RQKLDSWFSE (175 aa)). GTP-binding positions include 33–40 (GRSNAGKS), 60–64 (GRTQL), 78–81 (DLPG), 145–148 (TKAD), and 178–180 (FSS). Residues Ser40 and Thr62 each coordinate Mg(2+).

This sequence belongs to the TRAFAC class TrmE-Era-EngA-EngB-Septin-like GTPase superfamily. EngB GTPase family. Mg(2+) serves as cofactor.

Necessary for normal cell division and for the maintenance of normal septation. This chain is Probable GTP-binding protein EngB, found in Salmonella paratyphi B (strain ATCC BAA-1250 / SPB7).